The chain runs to 1013 residues: MDIS1-interacting receptor like kinase 1 (1013 aa).

Positions 1-23 are cleaved as a signal peptide; it reads MKMKIIVLFLYYCYIGSTSSVLA. The Extracellular portion of the chain corresponds to 24–633; it reads SIDNVNELSV…SSHSSLHGKR (610 aa). Residues N61, N82, N101, N137, N146, N151, and N155 are each glycosylated (N-linked (GlcNAc...) asparagine). LRR repeat units lie at residues 70–94, 95–117, 119–137, 139–163, 164–186, 187–213, 215–234, 235–259, 260–283, 284–307, 308–331, 333–355, 357–379, 381–403, 405–426, 427–451, 453–475, 477–498, 499–523, 525–547, 548–571, and 573–595; these read NGNVEKLDLAGMNLTGKISDSISQL, SSLVSFNISCNGFESLLPKSIPP, KSIDISQNSFSGSLFLFSN, SLGLVHLNASGNNLSGNLTEDLGNL, VSLEVLDLRGNFFQGSLPSSFKN, LQKLRFLGLSGNNLTGELPSVLGQLPS, ETAILGYNEFKGPIPPEFGN, INSLKYLDLAIGKLSGEIPSELGKL, KSLETLLLYENNFTGTIPREIGSI, TTLKVLDFSDNALTGEIPMEITKL, KNLQLLNLMRNKLSGSIPPAISSL, QLQVLELWNNTLSGELPSDLGKN, PLQWLDVSSNSFSGEIPSTLCNK, NLTKLILFNNTFTGQIPATLSTC, SLVRVRMQNNLLNGSIPIGFGK, LEKLQRLELAGNRLSGGIPGDISDS, SLSFIDFSRNQIRSSLPSTILSI, NLQAFLVADNFISGEVPDQFQD, CPSLSNLDLSSNTLTGTIPSSIASC, KLVSLNLRNNNLTGEIPRQITTM, SALAVLDLSNNSLTGVLPESIGTS, and ALELLNVSYNKLTGPVPINGFLK. N-linked (GlcNAc...) asparagine glycosylation occurs at N199. The N-linked (GlcNAc...) asparagine glycan is linked to N271. N341 carries an N-linked (GlcNAc...) asparagine glycan. N381, N389, and N417 each carry an N-linked (GlcNAc...) asparagine glycan. N-linked (GlcNAc...) asparagine glycans are attached at residues N535, N557, and N578. Residues 634-654 form a helical membrane-spanning segment; that stretch reads IVAGWLIGIASVLALGILTIV. Residues 655–1013 lie on the Cytoplasmic side of the membrane; that stretch reads TRTLYKKWYS…FSTSPVNGLL (359 aa). Phosphothreonine is present on T691. The Protein kinase domain occupies 699-983; the sequence is IKESNMIGMG…SMLGEAKPRR (285 aa). ATP-binding positions include 705–713 and K728; that span reads IGMGATGIV. T710 is subject to Phosphothreonine; by autocatalysis. 2 positions are modified to phosphothreonine; by autocatalysis: T741 and T742. Y777 and Y818 each carry phosphotyrosine. The active-site Proton acceptor is D831. Position 862 is a phosphothreonine; by autocatalysis (T862). S864 carries the post-translational modification Phosphoserine; by autocatalysis. At Y872 the chain carries Phosphotyrosine. Y879 carries the post-translational modification Phosphotyrosine; by autocatalysis. A phosphothreonine; by autocatalysis mark is found at T880 and T992. The segment at 976-1013 is disordered; it reads LGEAKPRRKSNSNEENTSRSLAEKHSSVFSTSPVNGLL. Residues 1002–1013 show a composition bias toward polar residues; the sequence is SVFSTSPVNGLL.

This sequence belongs to the protein kinase superfamily. Ser/Thr protein kinase family. In terms of assembly, homodimer. Interacts with MDIS1 and LURE1.2. In terms of processing, autophosphorylation induced by the interaction with LURE1.2. Expressed in pollen tubes.

It localises to the cell membrane. The catalysed reaction is L-seryl-[protein] + ATP = O-phospho-L-seryl-[protein] + ADP + H(+). The enzyme catalyses L-threonyl-[protein] + ATP = O-phospho-L-threonyl-[protein] + ADP + H(+). In terms of biological role, involved in the regulation of procambium maintenance and polarity during vascular-tissue development. Involved in the pollen tube perception of the female signal. Phosphorylates MDSI1. The sequence is that of MDIS1-interacting receptor like kinase 1 from Arabidopsis thaliana (Mouse-ear cress).